Consider the following 513-residue polypeptide: Tigger transposable element-derived protein 4 (513 aa).

Residues proline 12 to valine 63 enclose the HTH psq-type domain. 2 consecutive DNA-binding regions (H-T-H motif) follow at residues lysine 39 to asparagine 59 and proline 108 to arginine 139. The HTH CENPB-type domain maps to lysine 75–alanine 146. Residues tyrosine 174 to tyrosine 375 enclose the DDE-1 domain. Over residues threonine 433–glutamate 448 the composition is skewed to basic and acidic residues. Residues threonine 433–lysine 473 form a disordered region.

This sequence belongs to the tigger transposable element derived protein family.

Its subcellular location is the nucleus. In Mus musculus (Mouse), this protein is Tigger transposable element-derived protein 4 (Tigd4).